The sequence spans 364 residues: Apelin receptor (364 aa).

The Extracellular portion of the chain corresponds to 1-39 (MATDEFSSSTTPSYDYYDYTNESGLPPCDETDWDLSYSL). N-linked (GlcNAc...) asparagine glycosylation occurs at Asn21. 2 cysteine pairs are disulfide-bonded: Cys28/Cys288 and Cys110/Cys187. The helical transmembrane segment at 40-60 (LPVFYMIVFVLGLSGNGVVIF) threads the bilayer. At 61–78 (TVWKAKPKRRSADTYIGN) the chain is on the cytoplasmic side. A helical transmembrane segment spans residues 79–99 (LALADLAFVVTLPLWATYTAL). The Extracellular portion of the chain corresponds to 100-112 (GFHWPFGSALCKL). A helical membrane pass occupies residues 113–133 (SSYLVLLNMFASVFCLTCLSF). The Cytoplasmic segment spans residues 134-153 (DRYLAIVHSLSSAKLRSRSS). Residues 154 to 174 (ILVSLAVIWLFSGLLALPSLI) traverse the membrane as a helical segment. The Extracellular portion of the chain corresponds to 175–201 (LRDTRVEGNNTICDLDFSGVSSKENEN). Residue Asn183 is glycosylated (N-linked (GlcNAc...) asparagine). The chain crosses the membrane as a helical span at residues 202–222 (FWIGGLSILTTVPGFLLPLLL). The Cytoplasmic portion of the chain corresponds to 223–250 (MTIFYCFIGGKVTMHFQNLKKEEQKKKR). The helical transmembrane segment at 251–271 (LLKIIITLVVVFAICWLPFHI) threads the bilayer. The Extracellular portion of the chain corresponds to 272–298 (LKTIHFLDLMGFLELSCSTQNIIVSLH). A helical membrane pass occupies residues 299 to 319 (PYATCLAYINSCLNPFLYAFF). Topologically, residues 320-364 (DLRFRSQCFFFFGFKKALQGHLSNTSSSLSAQTQKSEIHSLATKV) are cytoplasmic.

Belongs to the G-protein coupled receptor 1 family.

It localises to the cell membrane. Functionally, g protein-coupled receptor for peptide hormones apelin (apln) and apelin receptor early endogenous ligand (apela), that plays a role in the regulation of normal cardiovascular function and fluid homeostasis. When acting as apelin receptor, activates both G(i) protein pathway that inhibits adenylate cyclase activity, and the beta-arrestin pathway that promotes internalization of the receptor. Also functions as mechanoreceptor that is activated by pathological stimuli in a G-protein-independent fashion to induce beta-arrestin signaling, hence eliciting cardiac hypertrophy. However, the presence of apelin ligand blunts cardiac hypertrophic induction from APLNR/APJ on response to pathological stimuli. Plays a key role in early development such as gastrulation, blood vessels formation and heart morphogenesis by acting as a receptor for apela hormone, promoting endoderm and mesendoderm cell migration and regulating the migration of cells fated to become myocardial progenitors, respectively. Promotes angioblast migration toward the embryonic midline, i.e. the position of the future vessel formation, during vasculogenesis. May promote sinus venosus (SV)-derived endothelial cells migration into the developing heart to promote coronary blood vessel development. Required for cardiovascular development, particularly for intersomitic vein angiogenesis. Plays also a role in various processes in adults such as regulation of blood vessel formation, blood pressure, heart contractility, and heart failure. Acts upstream of the i/o type of G-alpha proteins in the differentiation of endothelium, erythroid cells, myeloid cells and cardiomyocytes. This is Apelin receptor (aplnr) from Xenopus tropicalis (Western clawed frog).